Reading from the N-terminus, the 222-residue chain is Deoxyribose-phosphate aldolase (222 aa).

The active-site Proton donor/acceptor is the aspartate 90. The Schiff-base intermediate with acetaldehyde role is filled by lysine 152. Lysine 181 (proton donor/acceptor) is an active-site residue.

The protein belongs to the DeoC/FbaB aldolase family. DeoC type 1 subfamily.

Its subcellular location is the cytoplasm. It carries out the reaction 2-deoxy-D-ribose 5-phosphate = D-glyceraldehyde 3-phosphate + acetaldehyde. It functions in the pathway carbohydrate degradation; 2-deoxy-D-ribose 1-phosphate degradation; D-glyceraldehyde 3-phosphate and acetaldehyde from 2-deoxy-alpha-D-ribose 1-phosphate: step 2/2. In terms of biological role, catalyzes a reversible aldol reaction between acetaldehyde and D-glyceraldehyde 3-phosphate to generate 2-deoxy-D-ribose 5-phosphate. The chain is Deoxyribose-phosphate aldolase from Pectobacterium carotovorum subsp. carotovorum (strain PC1).